We begin with the raw amino-acid sequence, 113 residues long: Nucleoid-associated protein EUBREC_0329 (113 aa).

The segment covering 1 to 12 (MARRGGFPGGMP) has biased composition (gly residues). The interval 1 to 45 (MARRGGFPGGMPGNMNNLMKQAQKMQRQMEEAQKQLEDAEVTAKA) is disordered. Basic and acidic residues predominate over residues 27–37 (RQMEEAQKQLE).

Belongs to the YbaB/EbfC family. Homodimer.

It localises to the cytoplasm. The protein resides in the nucleoid. Functionally, binds to DNA and alters its conformation. May be involved in regulation of gene expression, nucleoid organization and DNA protection. In Agathobacter rectalis (strain ATCC 33656 / DSM 3377 / JCM 17463 / KCTC 5835 / VPI 0990) (Eubacterium rectale), this protein is Nucleoid-associated protein EUBREC_0329.